Here is a 146-residue protein sequence, read N- to C-terminus: Ribonuclease H (146 aa).

The RNase H type-1 domain occupies 1-138 (MYAWTDGACR…ADALANRGID (138 aa)). 4 residues coordinate Mg(2+): Asp6, Glu44, Asp66, and Asp130.

Belongs to the RNase H family. Monomer. It depends on Mg(2+) as a cofactor.

The protein localises to the cytoplasm. The catalysed reaction is Endonucleolytic cleavage to 5'-phosphomonoester.. Endonuclease that specifically degrades the RNA of RNA-DNA hybrids. The polypeptide is Ribonuclease H (Alkalilimnicola ehrlichii (strain ATCC BAA-1101 / DSM 17681 / MLHE-1)).